Here is a 540-residue protein sequence, read N- to C-terminus: Chaperonin GroEL (540 aa).

ATP is bound by residues 29–32 (TLGP), 86–90 (DGTTT), Gly413, 476–478 (NAA), and Asp492.

Belongs to the chaperonin (HSP60) family. As to quaternary structure, forms a cylinder of 14 subunits composed of two heptameric rings stacked back-to-back. Interacts with the co-chaperonin GroES.

It is found in the cytoplasm. It catalyses the reaction ATP + H2O + a folded polypeptide = ADP + phosphate + an unfolded polypeptide.. Its function is as follows. Together with its co-chaperonin GroES, plays an essential role in assisting protein folding. The GroEL-GroES system forms a nano-cage that allows encapsulation of the non-native substrate proteins and provides a physical environment optimized to promote and accelerate protein folding. The protein is Chaperonin GroEL of Geobacillus thermodenitrificans (strain NG80-2).